A 384-amino-acid chain; its full sequence is Anhydro-N-acetylmuramic acid kinase (384 aa).

ATP is bound at residue 9–16 (GTSYDAID).

This sequence belongs to the anhydro-N-acetylmuramic acid kinase family.

It catalyses the reaction 1,6-anhydro-N-acetyl-beta-muramate + ATP + H2O = N-acetyl-D-muramate 6-phosphate + ADP + H(+). Its pathway is amino-sugar metabolism; 1,6-anhydro-N-acetylmuramate degradation. The protein operates within cell wall biogenesis; peptidoglycan recycling. In terms of biological role, catalyzes the specific phosphorylation of 1,6-anhydro-N-acetylmuramic acid (anhMurNAc) with the simultaneous cleavage of the 1,6-anhydro ring, generating MurNAc-6-P. Is required for the utilization of anhMurNAc either imported from the medium or derived from its own cell wall murein, and thus plays a role in cell wall recycling. In Streptomyces avermitilis (strain ATCC 31267 / DSM 46492 / JCM 5070 / NBRC 14893 / NCIMB 12804 / NRRL 8165 / MA-4680), this protein is Anhydro-N-acetylmuramic acid kinase.